The primary structure comprises 390 residues: Chaperone protein DnaJ (390 aa).

The 65-residue stretch at 6–70 (DYYEILGVPR…QKRAQYDQFG (65 aa)) folds into the J domain. The CR-type zinc finger occupies 146 to 228 (GSEKEIYVTR…CHGTGKVRRK (83 aa)). Zn(2+) contacts are provided by C159, C162, C176, C179, C202, C205, C216, and C219. CXXCXGXG motif repeat units lie at residues 159–166 (CPTCKGKG), 176–183 (CDMCNGTG), 202–209 (CPKCHGTG), and 216–223 (CHECHGTG).

Belongs to the DnaJ family. Homodimer. It depends on Zn(2+) as a cofactor.

The protein resides in the cytoplasm. Functionally, participates actively in the response to hyperosmotic and heat shock by preventing the aggregation of stress-denatured proteins and by disaggregating proteins, also in an autonomous, DnaK-independent fashion. Unfolded proteins bind initially to DnaJ; upon interaction with the DnaJ-bound protein, DnaK hydrolyzes its bound ATP, resulting in the formation of a stable complex. GrpE releases ADP from DnaK; ATP binding to DnaK triggers the release of the substrate protein, thus completing the reaction cycle. Several rounds of ATP-dependent interactions between DnaJ, DnaK and GrpE are required for fully efficient folding. Also involved, together with DnaK and GrpE, in the DNA replication of plasmids through activation of initiation proteins. The chain is Chaperone protein DnaJ from Dictyoglomus thermophilum (strain ATCC 35947 / DSM 3960 / H-6-12).